A 365-amino-acid polypeptide reads, in one-letter code: tRNA(Met) cytidine acetate ligase (365 aa).

Residues 7 to 20 (IAEF…HKYL), glycine 96, asparagine 152, and arginine 175 each bind ATP.

Belongs to the TmcAL family.

It localises to the cytoplasm. The enzyme catalyses cytidine(34) in elongator tRNA(Met) + acetate + ATP = N(4)-acetylcytidine(34) in elongator tRNA(Met) + AMP + diphosphate. Its function is as follows. Catalyzes the formation of N(4)-acetylcytidine (ac(4)C) at the wobble position of elongator tRNA(Met), using acetate and ATP as substrates. First activates an acetate ion to form acetyladenylate (Ac-AMP) and then transfers the acetyl group to tRNA to form ac(4)C34. This chain is tRNA(Met) cytidine acetate ligase, found in Streptococcus pneumoniae (strain Hungary19A-6).